The primary structure comprises 338 residues: Alanine racemase (338 aa).

K33 serves as the catalytic Proton acceptor; specific for D-alanine. N6-(pyridoxal phosphate)lysine is present on K33. R126 contacts substrate. Y236 functions as the Proton acceptor; specific for L-alanine in the catalytic mechanism. M284 contributes to the substrate binding site.

It belongs to the alanine racemase family. Pyridoxal 5'-phosphate serves as cofactor.

The catalysed reaction is L-alanine = D-alanine. It participates in amino-acid biosynthesis; D-alanine biosynthesis; D-alanine from L-alanine: step 1/1. In terms of biological role, catalyzes the interconversion of L-alanine and D-alanine. May also act on other amino acids. This chain is Alanine racemase (alr), found in Aquifex aeolicus (strain VF5).